Here is a 217-residue protein sequence, read N- to C-terminus: Proteasome subunit beta type-6-B like protein (217 aa).

Residues 1–16 (MERHFMDSQIKGVSTG) constitute a propeptide, removed in mature form. Thr17 acts as the Nucleophile in catalysis.

Belongs to the peptidase T1B family. In terms of assembly, the 26S proteasome consists of a 20S proteasome core and two 19S regulatory subunits. The 20S proteasome core is composed of 28 subunits that are arranged in four stacked rings, resulting in a barrel-shaped structure. The two end rings are each formed by seven alpha subunits, and the two central rings are each formed by seven beta subunits. The catalytic chamber with the active sites is on the inside of the barrel.

It is found in the cytoplasm. The protein localises to the nucleus. The catalysed reaction is Cleavage of peptide bonds with very broad specificity.. Functionally, the proteasome is a multicatalytic proteinase complex which is characterized by its ability to cleave peptides with Arg, Phe, Tyr, Leu, and Glu adjacent to the leaving group at neutral or slightly basic pH. The proteasome has an ATP-dependent proteolytic activity. This subunit is involved in antigen processing to generate class I binding peptides. The protein is Proteasome subunit beta type-6-B like protein (psmb6l-b) of Salmo salar (Atlantic salmon).